Consider the following 320-residue polypeptide: Serpentine receptor class delta-40 (320 aa).

Transmembrane regions (helical) follow at residues 12-32, 42-62, 95-115, 133-153, 189-209, 243-263, and 273-293; these read IFYP…IYLI, MLKV…VVSC, YQVL…TFVF, IILL…IMVI, LINF…SFFF, AFLP…CILT, and FMTV…LYFV.

Belongs to the nematode receptor-like protein srd family.

The protein localises to the membrane. This is Serpentine receptor class delta-40 (srd-40) from Caenorhabditis elegans.